The following is a 147-amino-acid chain: Large ribosomal subunit protein uL22c (147 aa).

Belongs to the universal ribosomal protein uL22 family. In terms of assembly, part of the 50S ribosomal subunit.

Its subcellular location is the plastid. Its function is as follows. This protein binds specifically to 23S rRNA. In terms of biological role, the globular domain of the protein is located near the polypeptide exit tunnel on the outside of the subunit, while an extended beta-hairpin is found that lines the wall of the exit tunnel in the center of the 70S ribosome. In Cuscuta obtusiflora (Peruvian dodder), this protein is Large ribosomal subunit protein uL22c (rpl22).